Reading from the N-terminus, the 372-residue chain is L-selectin (372 aa).

Residues 1–28 form the signal peptide; the sequence is MIFPWKCQSTQRDLWNIFKLWGWTMLCC. The propeptide occupies 29–38; sequence DFLAHHGTDC. The Extracellular portion of the chain corresponds to 39 to 332; that stretch reads WTYHYSEKPM…FSMIKEGDYN (294 aa). The region spanning 55-155 is the C-type lectin domain; it reads RFCRDNYTDL…ACHKLKAALC (101 aa). Intrachain disulfides connect C57-C155, C128-C147, C128-C160, C160-C171, C165-C180, C182-C191, C197-C241, C227-C254, C259-C303, and C289-C316. N-linked (GlcNAc...) asparagine glycosylation is found at N60 and N104. Residues E118, N120, E126, N143, and D144 each coordinate Ca(2+). Residues 156 to 192 form the EGF-like domain; the sequence is YTASCQPWSCSGHGECVEIINNYTCNCDVGYYGPQCQ. N177 carries an N-linked (GlcNAc...) asparagine glycan. Sushi domains are found at residues 195–256 and 257–318; these read IQCE…TCQV and IQCE…ICQK. 4 N-linked (GlcNAc...) asparagine glycosylation sites follow: N216, N232, N246, and N271. Residues 333 to 355 traverse the membrane as a helical segment; the sequence is PLFIPVAVMVTAFSGLAFIIWLA. At 356–372 the chain is on the cytoplasmic side; that stretch reads RRLKKGKKSKRSMDDPY.

It belongs to the selectin/LECAM family. As to quaternary structure, interaction with SELPLG/PSGL1 and PODXL2 is required for promoting recruitment and rolling of leukocytes. This interaction is dependent on the sialyl Lewis X glycan modification of SELPLG and PODXL2, and tyrosine sulfation modifications of SELPLG. Sulfation on 'Tyr-51' of SELPLG is important for L-selectin binding. In terms of processing, N-glycosylated.

The protein localises to the cell membrane. Its function is as follows. Calcium-dependent lectin that mediates cell adhesion by binding to glycoproteins on neighboring cells. Mediates the adherence of lymphocytes to endothelial cells of high endothelial venules in peripheral lymph nodes. Promotes initial tethering and rolling of leukocytes in endothelia. The polypeptide is L-selectin (SELL) (Pan troglodytes (Chimpanzee)).